Reading from the N-terminus, the 354-residue chain is Histidinol-phosphate aminotransferase (354 aa).

Lys-210 is modified (N6-(pyridoxal phosphate)lysine).

This sequence belongs to the class-II pyridoxal-phosphate-dependent aminotransferase family. Histidinol-phosphate aminotransferase subfamily. Homodimer. The cofactor is pyridoxal 5'-phosphate.

The enzyme catalyses L-histidinol phosphate + 2-oxoglutarate = 3-(imidazol-4-yl)-2-oxopropyl phosphate + L-glutamate. The protein operates within amino-acid biosynthesis; L-histidine biosynthesis; L-histidine from 5-phospho-alpha-D-ribose 1-diphosphate: step 7/9. This Clostridium botulinum (strain ATCC 19397 / Type A) protein is Histidinol-phosphate aminotransferase.